The primary structure comprises 62 residues: Large ribosomal subunit protein bL28 (62 aa).

This sequence belongs to the bacterial ribosomal protein bL28 family.

The protein is Large ribosomal subunit protein bL28 of Helicobacter hepaticus (strain ATCC 51449 / 3B1).